The primary structure comprises 415 residues: WD repeat-containing protein JIP5 (415 aa).

5 WD repeats span residues 5–44, 104–142, 145–184, 189–228, and 233–282; these read DVGSQIFDVVFHPTFATVYTGLLNGHVKAFAYNEQGKEQA, AHDSTINRVKYLMPWLISTGDDDGVIKLWDPRQQECVRE, QHFDYITDFLWLDDKKQLVATSGDGTLSVMDVRSKKPEPF, DQDDELLSIVAIKGHSKIVVGTQLGILSIFNRSKGWGDCV, and GHPL…VVAD. The interval 328–415 is disordered; the sequence is GALGVTNENE…DVENAFFDEL (88 aa). Over residues 337 to 346 the composition is skewed to acidic residues; the sequence is EQSDEDEEMD. Residues 358–367 are compositionally biased toward low complexity; that stretch reads DGSGSSSSGE. The span at 390–405 shows a compositional bias: basic and acidic residues; the sequence is EQKPLDVDKPKGRNEI.

Belongs to the WD repeat WDR55 family.

The protein localises to the nucleus. Its subcellular location is the nucleolus. This is WD repeat-containing protein JIP5 (JIP5) from Laccaria bicolor (strain S238N-H82 / ATCC MYA-4686) (Bicoloured deceiver).